A 255-amino-acid chain; its full sequence is Imidazole glycerol phosphate synthase subunit HisF (255 aa).

Residues Asp11 and Asp130 contribute to the active site.

This sequence belongs to the HisA/HisF family. In terms of assembly, heterodimer of HisH and HisF.

Its subcellular location is the cytoplasm. It catalyses the reaction 5-[(5-phospho-1-deoxy-D-ribulos-1-ylimino)methylamino]-1-(5-phospho-beta-D-ribosyl)imidazole-4-carboxamide + L-glutamine = D-erythro-1-(imidazol-4-yl)glycerol 3-phosphate + 5-amino-1-(5-phospho-beta-D-ribosyl)imidazole-4-carboxamide + L-glutamate + H(+). The protein operates within amino-acid biosynthesis; L-histidine biosynthesis; L-histidine from 5-phospho-alpha-D-ribose 1-diphosphate: step 5/9. IGPS catalyzes the conversion of PRFAR and glutamine to IGP, AICAR and glutamate. The HisF subunit catalyzes the cyclization activity that produces IGP and AICAR from PRFAR using the ammonia provided by the HisH subunit. The polypeptide is Imidazole glycerol phosphate synthase subunit HisF (Prochlorococcus marinus subsp. pastoris (strain CCMP1986 / NIES-2087 / MED4)).